The following is a 492-amino-acid chain: Ketol-acid reductoisomerase (NADP(+)) (492 aa).

A KARI N-terminal Rossmann domain is found at 15–208 (AQLGKCRFMA…GGHRAGVLES (194 aa)). NADP(+) is bound by residues 45–48 (CGAQ), Arg-68, Arg-76, Ser-78, and 108–110 (DKQ). His-132 is an active-site residue. Gly-158 serves as a coordination point for NADP(+). 2 KARI C-terminal knotted domains span residues 209–344 (SFVA…TAAQ) and 345–485 (FEGK…MTDM). The Mg(2+) site is built by Asp-217, Glu-221, Glu-389, and Glu-393. Ser-414 is a substrate binding site.

Belongs to the ketol-acid reductoisomerase family. It depends on Mg(2+) as a cofactor.

The enzyme catalyses (2R)-2,3-dihydroxy-3-methylbutanoate + NADP(+) = (2S)-2-acetolactate + NADPH + H(+). The catalysed reaction is (2R,3R)-2,3-dihydroxy-3-methylpentanoate + NADP(+) = (S)-2-ethyl-2-hydroxy-3-oxobutanoate + NADPH + H(+). The protein operates within amino-acid biosynthesis; L-isoleucine biosynthesis; L-isoleucine from 2-oxobutanoate: step 2/4. It functions in the pathway amino-acid biosynthesis; L-valine biosynthesis; L-valine from pyruvate: step 2/4. In terms of biological role, involved in the biosynthesis of branched-chain amino acids (BCAA). Catalyzes an alkyl-migration followed by a ketol-acid reduction of (S)-2-acetolactate (S2AL) to yield (R)-2,3-dihydroxy-isovalerate. In the isomerase reaction, S2AL is rearranged via a Mg-dependent methyl migration to produce 3-hydroxy-3-methyl-2-ketobutyrate (HMKB). In the reductase reaction, this 2-ketoacid undergoes a metal-dependent reduction by NADPH to yield (R)-2,3-dihydroxy-isovalerate. The polypeptide is Ketol-acid reductoisomerase (NADP(+)) (Erwinia tasmaniensis (strain DSM 17950 / CFBP 7177 / CIP 109463 / NCPPB 4357 / Et1/99)).